The following is a 621-amino-acid chain: Probable bifunctional dTTP/UTP pyrophosphatase/methyltransferase protein (621 aa).

The tract at residues 11-223 is MAF-like; the sequence is LHKRVVLASA…PPRPEDLRRS (213 aa). The residue at position 21 (Ser-21) is a Phosphoserine. The active-site Proton acceptor; for pyrophosphatase activity is Asp-88. Position 228 is a phosphoserine (Ser-228). Thr-234 carries the post-translational modification Phosphothreonine. The tract at residues 235–279 is disordered; that stretch reads FEDLSDVEGGGSEPTQRDAGSRDEKAEAGEAGQATAEAECHRTRE. Residue Ser-239 is modified to Phosphoserine. The segment covering 249–262 has biased composition (basic and acidic residues); it reads TQRDAGSRDEKAEA. Residues 277–621 form an ASMT-like region; it reads TRETLPPFPT…DAILATKVAP (345 aa). A Phosphoserine modification is found at Ser-421. Residues Asp-482, 508–510, and Arg-525 contribute to the S-adenosyl-L-methionine site; that span reads GDF.

This sequence in the N-terminal section; belongs to the Maf family. YhdE subfamily. In the C-terminal section; belongs to the class I-like SAM-binding methyltransferase superfamily. Cation-independent O-methyltransferase family. In terms of assembly, homodimer. It depends on a divalent metal cation as a cofactor. In terms of tissue distribution, widely expressed. In adult, highly expressed in pancreas, placenta, fibroblast, thymus, prostate, testis, ovary and colon. Expressed at lower levels in spleen, small intestine and leukocytes. In fetus, expressed at high levels in the lung and kidney and at lower level in brain and liver.

The catalysed reaction is dTTP + H2O = dTMP + diphosphate + H(+). The enzyme catalyses UTP + H2O = UMP + diphosphate + H(+). It catalyses the reaction CTP + H2O = CMP + diphosphate + H(+). It carries out the reaction psi-UTP + H2O = psi-UMP + diphosphate + H(+). The catalysed reaction is 5-methyl-UTP + H2O = 5-methyl-UMP + diphosphate + H(+). The enzyme catalyses 5-methyl-CTP + H2O = 5-methyl-CMP + diphosphate + H(+). Nucleoside triphosphate pyrophosphatase that hydrolyzes dTTP and UTP. Can also hydrolyze CTP and the modified nucleotides pseudo-UTP, 5-methyl-UTP (m(5)UTP) and 5-methyl-CTP (m(5)CTP). Has weak activity with dCTP, 8-oxo-GTP and N(4)-methyl-dCTP. May have a dual role in cell division arrest and in preventing the incorporation of modified nucleotides into cellular nucleic acids. In addition, the presence of the putative catalytic domain of S-adenosyl-L-methionine binding in the C-terminal region argues for a methyltransferase activity. This is Probable bifunctional dTTP/UTP pyrophosphatase/methyltransferase protein (ASMTL) from Homo sapiens (Human).